We begin with the raw amino-acid sequence, 297 residues long: Probable E3 SUMO-protein ligase RNF212 (297 aa).

The RING-type zinc-finger motif lies at 7-46 (CNRCFQPPHRTSCFSLTNCGHVYCDACLGKGKKNECLICK). Residues 91-124 (RKRLLAFYREKISRLEESLRKSVLQIEQLQSMRS) are a coiled coil.

It is found in the nucleus. It localises to the chromosome. It participates in protein modification; protein sumoylation. Functionally, SUMO E3 ligase that acts as a regulator of crossing-over during meiosis: required to couple chromosome synapsis to the formation of crossover-specific recombination complexes. Localizes to recombination sites and stabilizes meiosis-specific recombination factors, such as MutS-gamma complex proteins (MSH4 and MSH5) and TEX11. May mediate sumoylation of target proteins MSH4 and/or MSH5, leading to enhance their binding to recombination sites. Acts as a limiting factor for crossover designation and/or reinforcement and plays an antagonist role with CCNB1IP1/HEI10 in the regulation of meiotic recombination. In Homo sapiens (Human), this protein is Probable E3 SUMO-protein ligase RNF212 (RNF212).